Consider the following 448-residue polypeptide: MSTTNAINGNLYEQLHQGRTNMYKSKVDVVLGAQWGDEGKGKVVDMLASEVDIVCRCQGGNNAGHTVVANGTEFDFHLLPSGVVNEKCISVIGNGVVIHLPSLFDEVLKNEAKGLQHLEHRLIISDRAHLVFDFHQHVDGMQEAEKGGKSLGTTKKGIGPAYSSKATRNGIRVGELLGDFNAFSDKFKLIVATHLRLFPSINVDVEAELTRYRDYAEKVRPYVKDTICFLHTALRNGKTILVEGANAAMLDIDFGTYPYVTSSNCSIGGVLTGLGLPPQTIGEVIGVVKAYTTRVGDGPFPSEQLNEIGDLLQTRGFEVGVTTKRKRRCGWLDIPLLRYTSLVNGYTCICLTKLDILDTLPEIKVAVSYKKANGDKLDHFPGTIAELGNIEVEYAVLPGWQTSTEHIRNFKELPENAQHYVRFLEKELSVPVRWVGVGKGRESIINVH.

GTP contacts are provided by residues 36-42 (GDEGKGK) and 64-66 (GHT). The Proton acceptor role is filled by Asp37. Residues Asp37 and Gly64 each contribute to the Mg(2+) site. IMP contacts are provided by residues 37 to 40 (DEGK), 62 to 65 (NAGH), Thr154, Arg168, Asn246, Thr261, and Arg325. The Proton donor role is filled by His65. Substrate is bound at residue 321-327 (VTTKRKR). Residues Arg327, 353–355 (KLD), and 436–438 (GVG) contribute to the GTP site.

This sequence belongs to the adenylosuccinate synthetase family. As to quaternary structure, homodimer. Mg(2+) serves as cofactor.

The protein localises to the cytoplasm. The catalysed reaction is IMP + L-aspartate + GTP = N(6)-(1,2-dicarboxyethyl)-AMP + GDP + phosphate + 2 H(+). It functions in the pathway purine metabolism; AMP biosynthesis via de novo pathway; AMP from IMP: step 1/2. In terms of biological role, plays an important role in the de novo pathway and in the salvage pathway of purine nucleotide biosynthesis. Catalyzes the first committed step in the biosynthesis of AMP from IMP. The polypeptide is Adenylosuccinate synthetase (Drosophila persimilis (Fruit fly)).